Consider the following 60-residue polypeptide: Beta-defensin 8 (60 aa).

Residues 1–22 (MRIHYLLFTFLLVLLSPLAAFS) form the signal peptide. The propeptide occupies 23 to 25 (QKI). Intrachain disulfides connect cysteine 31–cysteine 58, cysteine 38–cysteine 52, and cysteine 42–cysteine 59.

Belongs to the beta-defensin family. Most highly expressed in testis and heart.

It is found in the secreted. Functionally, a synthetic peptide displays antimicrobial activities against S.aureus, P.aeruginosa, E.coli and B.cepacia. The antimicrobial activity against S.aureus, E.coli and B.cepacia is reduced in raised concentration of NaCl, but its action against P.aeruginosa is independent of NaCl concentration. The protein is Beta-defensin 8 (Defb8) of Mus musculus (Mouse).